The primary structure comprises 310 residues: tRNA dimethylallyltransferase (310 aa).

14–21 (GPTASGKT) serves as a coordination point for ATP. 16–21 (TASGKT) is a binding site for substrate. The interaction with substrate tRNA stretch occupies residues 39-42 (DSMQ).

This sequence belongs to the IPP transferase family. In terms of assembly, monomer. It depends on Mg(2+) as a cofactor.

It catalyses the reaction adenosine(37) in tRNA + dimethylallyl diphosphate = N(6)-dimethylallyladenosine(37) in tRNA + diphosphate. Functionally, catalyzes the transfer of a dimethylallyl group onto the adenine at position 37 in tRNAs that read codons beginning with uridine, leading to the formation of N6-(dimethylallyl)adenosine (i(6)A). This chain is tRNA dimethylallyltransferase, found in Corynebacterium jeikeium (strain K411).